Here is a 453-residue protein sequence, read N- to C-terminus: F-box protein At4g27050 (453 aa).

Residues 3 to 51 form the F-box domain; it reads TDLISNLPDDVLGKILSLVPTKLAAATSVLSKRWRNLLPLVDSLDFDET.

Part of a SCF (ASK-cullin-F-box) protein ligase complex.

It participates in protein modification; protein ubiquitination. Component of SCF(ASK-cullin-F-box) E3 ubiquitin ligase complexes, which may mediate the ubiquitination and subsequent proteasomal degradation of target proteins. The sequence is that of F-box protein At4g27050 from Arabidopsis thaliana (Mouse-ear cress).